The sequence spans 460 residues: Argininosuccinate lyase (460 aa).

The protein belongs to the lyase 1 family. Argininosuccinate lyase subfamily.

Its subcellular location is the cytoplasm. It catalyses the reaction 2-(N(omega)-L-arginino)succinate = fumarate + L-arginine. It functions in the pathway amino-acid biosynthesis; L-arginine biosynthesis; L-arginine from L-ornithine and carbamoyl phosphate: step 3/3. The polypeptide is Argininosuccinate lyase (Prosthecochloris aestuarii (strain DSM 271 / SK 413)).